A 152-amino-acid chain; its full sequence is Histone H2B.1 (152 aa).

The segment covering 1-23 has biased composition (basic and acidic residues); the sequence is MAPKAEKKPAEKKPAAGEEKSAE. The interval 1–60 is disordered; sequence MAPKAEKKPAEKKPAAGEEKSAEKAPAGKKPKAEKRLPASKASSKEGGAGDKKGRKKAKK. An N6-acetyllysine mark is found at K7 and K35. K148 is covalently cross-linked (Glycyl lysine isopeptide (Lys-Gly) (interchain with G-Cter in ubiquitin)).

This sequence belongs to the histone H2B family. The nucleosome is a histone octamer containing two molecules each of H2A, H2B, H3 and H4 assembled in one H3-H4 heterotetramer and two H2A-H2B heterodimers. The octamer wraps approximately 147 bp of DNA. Can be acetylated to form H2BK6ac and H2BK33ac. In terms of processing, monoubiquitinated by BRE1 to form H2BK143ub1 and deubiquitinated by UBP26. Required for heterochromatic histone H3 di- and trimethylation at H3K4me. May give a specific tag for epigenetic transcriptional activation.

Its subcellular location is the nucleus. The protein localises to the chromosome. In terms of biological role, core component of nucleosome. Nucleosomes wrap and compact DNA into chromatin, limiting DNA accessibility to the cellular machineries which require DNA as a template. Histones thereby play a central role in transcription regulation, DNA repair, DNA replication and chromosomal stability. DNA accessibility is regulated via a complex set of post-translational modifications of histones, also called histone code, and nucleosome remodeling. In Oryza sativa subsp. indica (Rice), this protein is Histone H2B.1.